Consider the following 512-residue polypeptide: Bifunctional purine biosynthesis protein PurH (512 aa).

Residues 1–144 form the MGS-like domain; that stretch reads MKRALVSVSD…KNYRDVVVVV (144 aa).

Belongs to the PurH family.

The enzyme catalyses (6R)-10-formyltetrahydrofolate + 5-amino-1-(5-phospho-beta-D-ribosyl)imidazole-4-carboxamide = 5-formamido-1-(5-phospho-D-ribosyl)imidazole-4-carboxamide + (6S)-5,6,7,8-tetrahydrofolate. The catalysed reaction is IMP + H2O = 5-formamido-1-(5-phospho-D-ribosyl)imidazole-4-carboxamide. It participates in purine metabolism; IMP biosynthesis via de novo pathway; 5-formamido-1-(5-phospho-D-ribosyl)imidazole-4-carboxamide from 5-amino-1-(5-phospho-D-ribosyl)imidazole-4-carboxamide (10-formyl THF route): step 1/1. The protein operates within purine metabolism; IMP biosynthesis via de novo pathway; IMP from 5-formamido-1-(5-phospho-D-ribosyl)imidazole-4-carboxamide: step 1/1. The chain is Bifunctional purine biosynthesis protein PurH from Ligilactobacillus salivarius (strain UCC118) (Lactobacillus salivarius).